The primary structure comprises 368 residues: Caffeine synthase 3 (368 aa).

Tyr23 lines the S-adenosyl-L-homocysteine pocket. Residue Thr30 participates in caffeine binding. Residues Cys65, Asn70, Asp102, Leu103, Ser137, and Phe138 each contribute to the S-adenosyl-L-homocysteine site. Residues Tyr155, His158, and Trp159 each coordinate caffeine. A Mg(2+)-binding site is contributed by Asn176. Arg224 serves as a coordination point for caffeine. Mg(2+)-binding residues include Asp262, Phe264, and Asn265. Phe320 contacts caffeine.

This sequence belongs to the methyltransferase superfamily. Type-7 methyltransferase family. The cofactor is Mg(2+).

It catalyses the reaction theobromine + S-adenosyl-L-methionine = caffeine + S-adenosyl-L-homocysteine + H(+). The enzyme catalyses 7-methylxanthine + S-adenosyl-L-methionine = theobromine + S-adenosyl-L-homocysteine + H(+). It participates in alkaloid biosynthesis. Functionally, involved in the biosynthesis of caffeine. Catalyzes the conversion of 7-methylxanthine (7mX) to theobromine and of theobromine to caffeine. This is Caffeine synthase 3 from Camellia sinensis (Tea plant).